A 194-amino-acid chain; its full sequence is MTELALILVSAILVNNFVLVQFLGLCPFMGVSRKIETAIGLSLATTFVLTLAAMCSHILQRYVLRPLDLEYLRTIGFILVIAVVVQFTEMLVKKTSPLLYRVLGIFLPLITTNCIVLGVALLNANKAEYGFLQATTQGFGAGLGFSLVLVLFAALRERIAIADVPAPFRGAAIGMITAGLMSLAFMGFSGLVRP.

The next 6 helical transmembrane spans lie at 4-24 (LALILVSAILVNNFVLVQFLG), 39-59 (IGLSLATTFVLTLAAMCSHIL), 72-92 (LRTIGFILVIAVVVQFTEMLV), 102-122 (VLGIFLPLITTNCIVLGVALL), 135-155 (TTQGFGAGLGFSLVLVLFAAL), and 172-192 (AIGMITAGLMSLAFMGFSGLV).

The protein belongs to the NqrDE/RnfAE family. In terms of assembly, the complex is composed of six subunits: RnfA, RnfB, RnfC, RnfD, RnfE and RnfG.

The protein localises to the cell inner membrane. Functionally, part of a membrane-bound complex that couples electron transfer with translocation of ions across the membrane. The chain is Ion-translocating oxidoreductase complex subunit A from Pseudomonas aeruginosa (strain LESB58).